Here is a 361-residue protein sequence, read N- to C-terminus: 5-formaminoimidazole-4-carboxamide-1-(beta)-D-ribofuranosyl 5'-monophosphate synthetase (361 aa).

H27 and S94 together coordinate 5-amino-1-(5-phospho-beta-D-ribosyl)imidazole-4-carboxamide. The region spanning 116-348 (RAILRWEAER…MGQRIAKEIK (233 aa)) is the ATP-grasp domain. Residues 146-208 (PDEI…ANYC) and E230 contribute to the ATP site. A 5-amino-1-(5-phospho-beta-D-ribosyl)imidazole-4-carboxamide-binding site is contributed by N258. 2 residues coordinate Mg(2+): Q297 and E310.

It belongs to the phosphohexose mutase family. Mg(2+) is required as a cofactor. It depends on Mn(2+) as a cofactor.

It carries out the reaction 5-amino-1-(5-phospho-beta-D-ribosyl)imidazole-4-carboxamide + formate + ATP = 5-formamido-1-(5-phospho-D-ribosyl)imidazole-4-carboxamide + ADP + phosphate. It participates in purine metabolism; IMP biosynthesis via de novo pathway; 5-formamido-1-(5-phospho-D-ribosyl)imidazole-4-carboxamide from 5-amino-1-(5-phospho-D-ribosyl)imidazole-4-carboxamide (formate route): step 1/1. In terms of biological role, catalyzes the ATP- and formate-dependent formylation of 5-aminoimidazole-4-carboxamide-1-beta-d-ribofuranosyl 5'-monophosphate (AICAR) to 5-formaminoimidazole-4-carboxamide-1-beta-d-ribofuranosyl 5'-monophosphate (FAICAR) in the absence of folates. This Methanococcus vannielii (strain ATCC 35089 / DSM 1224 / JCM 13029 / OCM 148 / SB) protein is 5-formaminoimidazole-4-carboxamide-1-(beta)-D-ribofuranosyl 5'-monophosphate synthetase.